A 330-amino-acid chain; its full sequence is AP-1-like transcription factor YAP3 (330 aa).

The tract at residues 114–150 (SYSNTNYFSKNNGISPSSRSPSVAHNENVPDDSKAKK) is disordered. Residues 121–138 (FSKNNGISPSSRSPSVAH) show a composition bias toward polar residues. Phosphoserine is present on S135. Residues 144 to 207 (DDSKAKKKAQ…TEINAENRLL (64 aa)) enclose the bZIP domain. Positions 147–168 (KAKKKAQNRAAQKAFRERKEAR) are basic motif. The interval 172-207 (LQDKLLESERNRQSLLKEIEELRKANTEINAENRLL) is leucine-zipper.

It belongs to the bZIP family. YAP subfamily. In terms of assembly, homodimer. Interacts with the C-terminal, cytoplasmic tail of the multidrug resistance ABC transporter PDR5.

It is found in the cytoplasm. The protein resides in the nucleus. Its function is as follows. Transcription activator involved in the regulation of genes expressed in response to environmental changes. When overexpressed it activates transcription of the multidrug resistance ABC transporter PDR5, thus conferring resistance to the fungicide fluconazole (FCZ) and cycloheximide. When overexpressed, it also confers, independent of PDR5, increased resistance to 4-nitroquinoline-N-oxide (4-NQO). Preferentially binds 5'-TTACTAA-3'. The chain is AP-1-like transcription factor YAP3 (YAP3) from Saccharomyces cerevisiae (strain ATCC 204508 / S288c) (Baker's yeast).